The following is a 187-amino-acid chain: MRLVHAVLLPGIIVFVSNGNLLHAHALHEDETGVTAGRQLRAAASEVFGLSRASFGLGKAQDPLDKFFRKIINSRKPIETSYSAKGIHEKIIKAYDRHVFESKKAHDRHVSKSKKAHGRHVSKSKMAHDRHVSKSEKAPIQYASVADYLKKIYPGTDIERIVSTLKRHDEVGAKDLGAKLQTAVASQ.

Residues 1-19 (MRLVHAVLLPGIIVFVSNG) form the signal peptide. Residues 38–41 (RQLR) carry the RxLR motif. The segment at 50–92 (LSRASFGLGKAQDPLDKFFRKIINSRKPIETSYSAKGIHEKII) is leucine heptad repeat region. Tandem repeats lie at residues 93–103 (KAYDRHVFESK), 104–114 (KAHDRHVSKSK), 115–125 (KAHGRHVSKSK), and 126–136 (MAHDRHVSKSE). The segment at 93–136 (KAYDRHVFESKKAHDRHVSKSKKAHGRHVSKSKMAHDRHVSKSE) is 4 X 11 AA tandem repeats. A disordered region spans residues 104 to 136 (KAHDRHVSKSKKAHGRHVSKSKMAHDRHVSKSE). Residues 111-125 (SKSKKAHGRHVSKSK) are compositionally biased toward basic residues. Over residues 126–136 (MAHDRHVSKSE) the composition is skewed to basic and acidic residues. A highly variable C-terminus domain region spans residues 137-187 (KAPIQYASVADYLKKIYPGTDIERIVSTLKRHDEVGAKDLGAKLQTAVASQ).

The protein belongs to the RxLR effector family.

The protein resides in the secreted. Its subcellular location is the host nucleus. It localises to the host nucleolus. The protein localises to the host cytoplasm. Secreted effector that acts as an elicitor of hypersensitive response (HR) specifically on plants carrying defense protein RPP13. Recognition of ATR13 by RPP13 initiates defense responses that are effective against oomycete, bacterial and viral pathogens. Due to high polymorphism, ATR13-Emoy2 does not recognize RPP13-Nd, the RPP13 defense protein from Arabidopsis thaliana ecotype Niederzenz. ATR13-Emoy2 is recognized by RPP13 variants RPP13-UKID44, RPP13-UKID65 and RPP13-UKID71. In Hyaloperonospora arabidopsidis (strain Emoy2) (Downy mildew agent), this protein is Virulence protein ATR13.